Here is a 323-residue protein sequence, read N- to C-terminus: Phospho-N-acetylmuramoyl-pentapeptide-transferase (323 aa).

9 helical membrane-spanning segments follow: residues 12–32, 58–78, 84–104, 120–140, 151–171, 177–197, 200–220, 229–250, and 303–323; these read IVMA…IIIP, PTIG…VMVG, AMIA…DDLL, MILL…YIGT, INLG…VTNA, GLDG…GIIS, LGHI…LAFL, VFMG…ALIL, and KIVS…FASL.

It belongs to the glycosyltransferase 4 family. MraY subfamily. Mg(2+) is required as a cofactor.

The protein localises to the cell membrane. It catalyses the reaction UDP-N-acetyl-alpha-D-muramoyl-L-alanyl-gamma-D-glutamyl-meso-2,6-diaminopimeloyl-D-alanyl-D-alanine + di-trans,octa-cis-undecaprenyl phosphate = di-trans,octa-cis-undecaprenyl diphospho-N-acetyl-alpha-D-muramoyl-L-alanyl-D-glutamyl-meso-2,6-diaminopimeloyl-D-alanyl-D-alanine + UMP. It functions in the pathway cell wall biogenesis; peptidoglycan biosynthesis. Functionally, catalyzes the initial step of the lipid cycle reactions in the biosynthesis of the cell wall peptidoglycan: transfers peptidoglycan precursor phospho-MurNAc-pentapeptide from UDP-MurNAc-pentapeptide onto the lipid carrier undecaprenyl phosphate, yielding undecaprenyl-pyrophosphoryl-MurNAc-pentapeptide, known as lipid I. The protein is Phospho-N-acetylmuramoyl-pentapeptide-transferase of Clostridium perfringens (strain SM101 / Type A).